The primary structure comprises 246 residues: Octanoyltransferase (246 aa).

The 189-residue stretch at 46 to 234 (GTAGEMVWLV…AFEEVFGAAE (189 aa)) folds into the BPL/LPL catalytic domain. Residues 85–92 (RGGEYTYH), 165–167 (AIG), and 178–180 (GIA) contribute to the substrate site. Residue cysteine 196 is the Acyl-thioester intermediate of the active site.

The protein belongs to the LipB family.

The protein localises to the cytoplasm. It carries out the reaction octanoyl-[ACP] + L-lysyl-[protein] = N(6)-octanoyl-L-lysyl-[protein] + holo-[ACP] + H(+). It functions in the pathway protein modification; protein lipoylation via endogenous pathway; protein N(6)-(lipoyl)lysine from octanoyl-[acyl-carrier-protein]: step 1/2. In terms of biological role, catalyzes the transfer of endogenously produced octanoic acid from octanoyl-acyl-carrier-protein onto the lipoyl domains of lipoate-dependent enzymes. Lipoyl-ACP can also act as a substrate although octanoyl-ACP is likely to be the physiological substrate. The sequence is that of Octanoyltransferase from Chelativorans sp. (strain BNC1).